The sequence spans 702 residues: Protein crooked neck (702 aa).

HAT repeat units lie at residues 56–88 (DYQQ…WEEQ), 90–122 (QEIQ…MEMK), 124–156 (KQVN…MEEM), 158–189 (ENVA…FELR), 191–222 (KEID…FEES), 224–259 (GFIH…FEEG), 261–295 (KEHD…HEKK), 305–337 (VIVS…LIEA), 339–373 (GDRD…LWIN), 383–419 (EDAE…FEIR), 454–486 (REFE…LENL), 488–522 (GDTD…FEVA), and 524–555 (GETE…FEMG). Positions 620–628 (PRRIKKRQK) match the Nuclear localization signal motif. The tract at residues 670 to 702 (KDNTVDDPPATAIASEPEPAADAAPADTTDSGD) is disordered. Residues 683–702 (ASEPEPAADAAPADTTDSGD) are compositionally biased toward low complexity.

This sequence belongs to the crooked-neck family. Colocalizes with a complex containing snRNP proteins. Transcribed in all cells during embryonic development.

The protein localises to the nucleus speckle. May be involved in pre-mRNA splicing process. Involved in embryonic neurogenesis and cell rearrangement during Malpighian tubule morphogenesis. This Drosophila melanogaster (Fruit fly) protein is Protein crooked neck (crn).